Consider the following 144-residue polypeptide: Large ribosomal subunit protein uL15 (144 aa).

The disordered stretch occupies residues Met1–Val44. Gly residues predominate over residues Thr23–Gln35.

This sequence belongs to the universal ribosomal protein uL15 family. As to quaternary structure, part of the 50S ribosomal subunit.

Its function is as follows. Binds to the 23S rRNA. The sequence is that of Large ribosomal subunit protein uL15 from Pediococcus pentosaceus (strain ATCC 25745 / CCUG 21536 / LMG 10740 / 183-1w).